Consider the following 433-residue polypeptide: Glutamyl-tRNA reductase (433 aa).

Residues 49–52, serine 114, 119–121, and glutamine 125 contribute to the substrate site; these read TCNR and EPQ. Cysteine 50 acts as the Nucleophile in catalysis. 201–206 contacts NADP(+); it reads GAGETI.

The protein belongs to the glutamyl-tRNA reductase family. Homodimer.

It catalyses the reaction (S)-4-amino-5-oxopentanoate + tRNA(Glu) + NADP(+) = L-glutamyl-tRNA(Glu) + NADPH + H(+). It participates in porphyrin-containing compound metabolism; protoporphyrin-IX biosynthesis; 5-aminolevulinate from L-glutamyl-tRNA(Glu): step 1/2. Functionally, catalyzes the NADPH-dependent reduction of glutamyl-tRNA(Glu) to glutamate 1-semialdehyde (GSA). The protein is Glutamyl-tRNA reductase of Histophilus somni (strain 2336) (Haemophilus somnus).